We begin with the raw amino-acid sequence, 205 residues long: Dephospho-CoA kinase (205 aa).

The 200-residue stretch at 4–203 (KIGITGGIGS…QKIHYLCSAK (200 aa)) folds into the DPCK domain. 12-17 (GSGKSV) contributes to the ATP binding site.

The protein belongs to the CoaE family.

It is found in the cytoplasm. The catalysed reaction is 3'-dephospho-CoA + ATP = ADP + CoA + H(+). The protein operates within cofactor biosynthesis; coenzyme A biosynthesis; CoA from (R)-pantothenate: step 5/5. Its function is as follows. Catalyzes the phosphorylation of the 3'-hydroxyl group of dephosphocoenzyme A to form coenzyme A. This is Dephospho-CoA kinase from Bacteroides fragilis (strain ATCC 25285 / DSM 2151 / CCUG 4856 / JCM 11019 / LMG 10263 / NCTC 9343 / Onslow / VPI 2553 / EN-2).